Reading from the N-terminus, the 272-residue chain is Shikimate dehydrogenase (NADP(+)) (272 aa).

Shikimate-binding positions include 14–16 and T61; that span reads SKS. The active-site Proton acceptor is the K65. Shikimate-binding residues include N86 and D102. NADP(+)-binding positions include 126–130, 149–154, S189, and M213; these read GAGGA and NRTFSK. Y215 contributes to the shikimate binding site. G238 contacts NADP(+).

Belongs to the shikimate dehydrogenase family. As to quaternary structure, homodimer.

It catalyses the reaction shikimate + NADP(+) = 3-dehydroshikimate + NADPH + H(+). Its pathway is metabolic intermediate biosynthesis; chorismate biosynthesis; chorismate from D-erythrose 4-phosphate and phosphoenolpyruvate: step 4/7. Its function is as follows. Involved in the biosynthesis of the chorismate, which leads to the biosynthesis of aromatic amino acids. Catalyzes the reversible NADPH linked reduction of 3-dehydroshikimate (DHSA) to yield shikimate (SA). The polypeptide is Shikimate dehydrogenase (NADP(+)) (Haemophilus influenzae (strain ATCC 51907 / DSM 11121 / KW20 / Rd)).